Reading from the N-terminus, the 514-residue chain is Glutamyl-tRNA(Gln) amidotransferase subunit A (514 aa).

Active-site charge relay system residues include K76 and S151. The active-site Acyl-ester intermediate is the S175.

The protein belongs to the amidase family. GatA subfamily. In terms of assembly, heterotrimer of A, B and C subunits.

The catalysed reaction is L-glutamyl-tRNA(Gln) + L-glutamine + ATP + H2O = L-glutaminyl-tRNA(Gln) + L-glutamate + ADP + phosphate + H(+). Allows the formation of correctly charged Gln-tRNA(Gln) through the transamidation of misacylated Glu-tRNA(Gln) in organisms which lack glutaminyl-tRNA synthetase. The reaction takes place in the presence of glutamine and ATP through an activated gamma-phospho-Glu-tRNA(Gln). This Salinibacter ruber (strain DSM 13855 / M31) protein is Glutamyl-tRNA(Gln) amidotransferase subunit A.